The following is a 127-amino-acid chain: Large ribosomal subunit protein bL17 (127 aa).

Belongs to the bacterial ribosomal protein bL17 family. In terms of assembly, part of the 50S ribosomal subunit. Contacts protein L32.

In Lactobacillus delbrueckii subsp. bulgaricus (strain ATCC 11842 / DSM 20081 / BCRC 10696 / JCM 1002 / NBRC 13953 / NCIMB 11778 / NCTC 12712 / WDCM 00102 / Lb 14), this protein is Large ribosomal subunit protein bL17.